The following is a 66-amino-acid chain: Phylloseptin-S6 (66 aa).

The signal sequence occupies residues 1–22 (MAFLKKSLFLVLFLGLVSLSIC). The propeptide occupies 23–46 (EEEKRETEEEEHDQEEDDKSEEKR). Residues 25 to 44 (EKRETEEEEHDQEEDDKSEE) form a disordered region. The span at 30 to 41 (EEEEHDQEEDDK) shows a compositional bias: acidic residues. Leu65 carries the leucine amide modification.

It belongs to the frog skin active peptide (FSAP) family. Phylloseptin subfamily. In terms of tissue distribution, expressed by the skin glands.

Its subcellular location is the secreted. The protein resides in the target cell membrane. Functionally, antimicrobial peptide with high activity against Gram-positive bacteria, low activity against Gram-negative bacteria, and moderate activity against fungi. Acts by causing bacterial membrane disruption inducing leakage of the intracellular content followed by cell death. It adopts an alpha-helical amphipathic structure in membrane environments. Also shows highly potent antiparasitic activity against Leishmania species. Shows moderate hemolytic activity on human erythrocytes. Is also active on human monocytes. This is Phylloseptin-S6 from Phyllomedusa sauvagei (Sauvage's leaf frog).